A 586-amino-acid chain; its full sequence is GRB2-associated-binding protein 3 (586 aa).

The 113-residue stretch at 5–117 (DAVCTGWLVK…WVHSISQVCN (113 aa)) folds into the PH domain. Disordered stretches follow at residues 149 to 171 (AHAA…TEET) and 281 to 335 (SSTI…KKPE). Over residues 283-292 (TIQVDKNQGS) the composition is skewed to polar residues. Residues 316-326 (HLSERRQEEWS) show a composition bias toward basic and acidic residues. Residue S344 is modified to Phosphoserine. The interval 401–453 (GASGLGPHCSPDDYIPMNSGSISSPLPELPANLEPPPVNRDLKPQRKSRPPPL) is disordered. Residue S482 is modified to Phosphoserine.

The protein belongs to the GAB family. Interacts with PIK3R/p85, SHP2 and GRAP2/MONA. May interact with Grb2. Post-translationally, phosphorylated on tyrosine residue(s) after macrophage colony-stimulating factor (M-CSF) receptor stimulation.

This Homo sapiens (Human) protein is GRB2-associated-binding protein 3 (GAB3).